The chain runs to 227 residues: UPF0173 metal-dependent hydrolase Cmaq_1073 (227 aa).

This sequence belongs to the UPF0173 family.

The polypeptide is UPF0173 metal-dependent hydrolase Cmaq_1073 (Caldivirga maquilingensis (strain ATCC 700844 / DSM 13496 / JCM 10307 / IC-167)).